The chain runs to 513 residues: Carboxyethyl-arginine beta-lactam-synthase (513 aa).

The Mg(2+) site is built by Asp-253 and Asp-351.

Belongs to the asparagine synthetase family. Homodimer. The cofactor is Mg(2+).

The enzyme catalyses N(2)-(2-carboxyethyl)-L-arginine + ATP = deoxyamidinoproclavaminate + AMP + diphosphate + H(+). It functions in the pathway antibiotic biosynthesis; clavulanate biosynthesis; clavulanate from D-glyceraldehyde 3-phosphate and L-arginine: step 2/8. In Streptomyces clavuligerus, this protein is Carboxyethyl-arginine beta-lactam-synthase (bls).